The sequence spans 140 residues: uncharacterized protein (140 aa).

This is an uncharacterized protein from Xylella fastidiosa (strain 9a5c).